We begin with the raw amino-acid sequence, 449 residues long: Elongation factor 1-alpha (449 aa).

In terms of domain architecture, tr-type G spans 5-230 (KVHINIVVIG…DQIQEPKRPS (226 aa)). Residues 14–21 (GHVDSGKS) form a G1 region. 14–21 (GHVDSGKS) serves as a coordination point for GTP. Residue lysine 55 is modified to N6,N6-dimethyllysine. A G2 region spans residues 70–74 (GITID). Lysine 79 is modified (N6,N6,N6-trimethyllysine). The G3 stretch occupies residues 91 to 94 (DAPG). GTP contacts are provided by residues 91-95 (DAPGH) and 153-156 (NKMD). The tract at residues 153-156 (NKMD) is G4. Lysine 187 carries the post-translational modification N6,N6,N6-trimethyllysine. The tract at residues 194–196 (SGF) is G5. Lysine 261 is subject to N6-methyllysine. Glutamate 289 carries the 5-glutamyl glycerylphosphorylethanolamine modification. Lysine 306 is subject to N6,N6,N6-trimethyllysine. A 5-glutamyl glycerylphosphorylethanolamine modification is found at glutamate 362. At lysine 396 the chain carries N6,N6,N6-trimethyllysine.

The protein belongs to the TRAFAC class translation factor GTPase superfamily. Classic translation factor GTPase family. EF-Tu/EF-1A subfamily.

Its subcellular location is the cytoplasm. This protein promotes the GTP-dependent binding of aminoacyl-tRNA to the A-site of ribosomes during protein biosynthesis. The protein is Elongation factor 1-alpha (EF1) of Manihot esculenta (Cassava).